We begin with the raw amino-acid sequence, 89 residues long: Small ribosomal subunit protein bS20 (89 aa).

A disordered region spans residues 1-26 (MANSPQAKKRARQNEKNRKHNASLRS). Residues 7–22 (AKKRARQNEKNRKHNA) are compositionally biased toward basic residues.

It belongs to the bacterial ribosomal protein bS20 family.

Binds directly to 16S ribosomal RNA. The chain is Small ribosomal subunit protein bS20 from Marinobacter nauticus (strain ATCC 700491 / DSM 11845 / VT8) (Marinobacter aquaeolei).